The sequence spans 78 residues: Acyl carrier protein (78 aa).

The Carrier domain maps to 2–77 (DELFLRMRAL…DAYEFIKSKV (76 aa)). Ser-37 is subject to O-(pantetheine 4'-phosphoryl)serine.

It belongs to the acyl carrier protein (ACP) family. In terms of processing, 4'-phosphopantetheine is transferred from CoA to a specific serine of apo-ACP by AcpS. This modification is essential for activity because fatty acids are bound in thioester linkage to the sulfhydryl of the prosthetic group.

Its subcellular location is the cytoplasm. Its pathway is lipid metabolism; fatty acid biosynthesis. Carrier of the growing fatty acid chain in fatty acid biosynthesis. The protein is Acyl carrier protein of Treponema pallidum (strain Nichols).